The primary structure comprises 88 residues: Small ribosomal subunit protein uS17 (88 aa).

This sequence belongs to the universal ribosomal protein uS17 family. Part of the 30S ribosomal subunit.

One of the primary rRNA binding proteins, it binds specifically to the 5'-end of 16S ribosomal RNA. The sequence is that of Small ribosomal subunit protein uS17 from Prochlorococcus marinus (strain MIT 9303).